Here is a 1898-residue protein sequence, read N- to C-terminus: Receptor-type tyrosine-protein phosphatase F (1898 aa).

The signal sequence occupies residues 1–29 (MAPEPAPGRRMVPLVPALVMLGLMAGAHG). Residues 30-1254 (DSKPVFVKVP…QQQEEPEMLW (1225 aa)) lie on the Extracellular side of the membrane. Ig-like C2-type domains follow at residues 33–123 (PVFV…AKLS), 135–224 (PTID…ANLY), and 232–314 (PRFS…AQVT). Residues cysteine 54 and cysteine 107 are joined by a disulfide bond. Residue 68-77 (KKGKKVSSQR) coordinates heparin. A glycan (N-linked (GlcNAc...) asparagine) is linked at asparagine 117. Cysteine 156 and cysteine 207 form a disulfide bridge. 2 N-linked (GlcNAc...) asparagine glycosylation sites follow: asparagine 250 and asparagine 295. Cysteine 253 and cysteine 298 form a disulfide bridge. 8 Fibronectin type-III domains span residues 321–411 (PPID…TGEQ), 416–510 (PPRR…TQQG), 514–604 (QPAD…TAQS), 609–706 (PPQK…TDED), 711–810 (PPRK…TTGA), 811–904 (VPGR…TPED), 909–1001 (FPQN…TMPV), and 1005–1089 (FAKN…TAPD). Positions 693 to 712 (GPESSPVLVRTDEDVPSGPP) are disordered. The N-linked (GlcNAc...) asparagine glycan is linked to asparagine 721. N-linked (GlcNAc...) asparagine glycans are attached at residues asparagine 941, asparagine 957, and asparagine 960. The chain crosses the membrane as a helical span at residues 1255–1275 (VTGPVLAVILIILIVIAILLF). Over 1276-1898 (KRKRTHSPSS…YLGSFDHYAT (623 aa)) the chain is Cytoplasmic. Serine 1296 carries the phosphoserine modification. Tyrosine-protein phosphatase domains are found at residues 1343–1598 (FSQE…LLEA) and 1630–1889 (MELE…ALEY). Substrate-binding positions include aspartate 1507, 1539–1545 (CSAGVGR), and glutamine 1583. Cysteine 1539 (phosphocysteine intermediate) is an active-site residue. Cysteine 1830 acts as the Phosphocysteine intermediate in catalysis.

It belongs to the protein-tyrosine phosphatase family. Receptor class 2A subfamily. Interacts with GRIP1. Interacts with PPFIA1, PPFIA2 and PPFIA3. Interacts with PTPRF. Expressed in the cell of the T lineage but not in cells of any other hemopoietic lineage.

It localises to the membrane. The catalysed reaction is O-phospho-L-tyrosyl-[protein] + H2O = L-tyrosyl-[protein] + phosphate. In terms of biological role, possible cell adhesion receptor. It possesses an intrinsic protein tyrosine phosphatase activity (PTPase) and dephosphorylates EPHA2 regulating its activity. The chain is Receptor-type tyrosine-protein phosphatase F (Ptprf) from Mus musculus (Mouse).